A 112-amino-acid chain; its full sequence is ATP synthase subunit c (112 aa).

2 helical membrane-spanning segments follow: residues 36–56 (FSVL…AIGM) and 81–101 (MFIA…IALI).

Belongs to the ATPase C chain family. F-type ATPases have 2 components, F(1) - the catalytic core - and F(0) - the membrane proton channel. F(1) has five subunits: alpha(3), beta(3), gamma(1), delta(1), epsilon(1). F(0) has three main subunits: a(1), b(2) and c(10-14). The alpha and beta chains form an alternating ring which encloses part of the gamma chain. F(1) is attached to F(0) by a central stalk formed by the gamma and epsilon chains, while a peripheral stalk is formed by the delta and b chains.

It is found in the cell inner membrane. In terms of biological role, f(1)F(0) ATP synthase produces ATP from ADP in the presence of a proton or sodium gradient. F-type ATPases consist of two structural domains, F(1) containing the extramembraneous catalytic core and F(0) containing the membrane proton channel, linked together by a central stalk and a peripheral stalk. During catalysis, ATP synthesis in the catalytic domain of F(1) is coupled via a rotary mechanism of the central stalk subunits to proton translocation. In Campylobacter jejuni subsp. jejuni serotype O:2 (strain ATCC 700819 / NCTC 11168), this protein is ATP synthase subunit c.